The following is a 90-amino-acid chain: Probable Fe(2+)-trafficking protein (90 aa).

It belongs to the Fe(2+)-trafficking protein family.

In terms of biological role, could be a mediator in iron transactions between iron acquisition and iron-requiring processes, such as synthesis and/or repair of Fe-S clusters in biosynthetic enzymes. This is Probable Fe(2+)-trafficking protein from Chromobacterium violaceum (strain ATCC 12472 / DSM 30191 / JCM 1249 / CCUG 213 / NBRC 12614 / NCIMB 9131 / NCTC 9757 / MK).